The sequence spans 451 residues: Phosphoglucosamine mutase (451 aa).

Serine 107 acts as the Phosphoserine intermediate in catalysis. Serine 107, aspartate 246, aspartate 248, and aspartate 250 together coordinate Mg(2+). Serine 107 is subject to Phosphoserine.

It belongs to the phosphohexose mutase family. It depends on Mg(2+) as a cofactor. In terms of processing, activated by phosphorylation.

The enzyme catalyses alpha-D-glucosamine 1-phosphate = D-glucosamine 6-phosphate. Catalyzes the conversion of glucosamine-6-phosphate to glucosamine-1-phosphate. This is Phosphoglucosamine mutase from Burkholderia ambifaria (strain MC40-6).